The primary structure comprises 874 residues: Alanine--tRNA ligase (874 aa).

Residues H562, H566, C665, and H669 each coordinate Zn(2+).

This sequence belongs to the class-II aminoacyl-tRNA synthetase family. Requires Zn(2+) as cofactor.

It is found in the cytoplasm. The enzyme catalyses tRNA(Ala) + L-alanine + ATP = L-alanyl-tRNA(Ala) + AMP + diphosphate. Functionally, catalyzes the attachment of alanine to tRNA(Ala) in a two-step reaction: alanine is first activated by ATP to form Ala-AMP and then transferred to the acceptor end of tRNA(Ala). Also edits incorrectly charged Ser-tRNA(Ala) and Gly-tRNA(Ala) via its editing domain. In Pseudomonas fluorescens (strain Pf0-1), this protein is Alanine--tRNA ligase.